The chain runs to 157 residues: MHSNVKKVTDKDVIKPVGIPFVVYFSSISNNTHRFIQKLEIENIRIPYELDQSISVNRDYVLVTPTYSGGGEYVEGAVPKQVIKFLNNKENRSFCRGVISSGNTNFGDTFGIAGPIISKKLNVPFLYQFELLGTQHDVSQIKQILFRFWEDGNNERK.

The protein belongs to the NrdI family.

Its function is as follows. Probably involved in ribonucleotide reductase function. This is Protein NrdI from Mycoplasma mycoides subsp. mycoides SC (strain CCUG 32753 / NCTC 10114 / PG1).